The following is a 327-amino-acid chain: Ribonucleoside-diphosphate reductase small chain (327 aa).

Fe cation contacts are provided by Asp-70, Glu-101, and His-104. Tyr-108 is an active-site residue. Residues Glu-164, Glu-198, and His-201 each contribute to the Fe cation site.

This sequence belongs to the ribonucleoside diphosphate reductase small chain family. In terms of assembly, heterotetramer composed of a homodimer of the large subunit (R1) and a homodimer of the small subunit (R2). Larger multisubunit protein complex are also active, composed of (R1)n(R2)n. Fe cation is required as a cofactor.

The catalysed reaction is a 2'-deoxyribonucleoside 5'-diphosphate + [thioredoxin]-disulfide + H2O = a ribonucleoside 5'-diphosphate + [thioredoxin]-dithiol. Functionally, ribonucleoside-diphosphate reductase holoenzyme provides the precursors necessary for viral DNA synthesis. Allows virus growth in non-dividing cells. Catalyzes the biosynthesis of deoxyribonucleotides from the corresponding ribonucleotides. This chain is Ribonucleoside-diphosphate reductase small chain, found in Ornithodoros (relapsing fever ticks).